A 344-amino-acid polypeptide reads, in one-letter code: Anthranilate phosphoribosyltransferase (344 aa).

5-phospho-alpha-D-ribose 1-diphosphate contacts are provided by residues G84, 87 to 88 (GD), T92, 94 to 97 (NIST), 112 to 120 (KHGNRSVSS), and S124. G84 contributes to the anthranilate binding site. A Mg(2+)-binding site is contributed by S96. N115 contributes to the anthranilate binding site. R170 provides a ligand contact to anthranilate. Mg(2+) contacts are provided by D229 and E230.

Belongs to the anthranilate phosphoribosyltransferase family. Homodimer. It depends on Mg(2+) as a cofactor.

The enzyme catalyses N-(5-phospho-beta-D-ribosyl)anthranilate + diphosphate = 5-phospho-alpha-D-ribose 1-diphosphate + anthranilate. The protein operates within amino-acid biosynthesis; L-tryptophan biosynthesis; L-tryptophan from chorismate: step 2/5. Catalyzes the transfer of the phosphoribosyl group of 5-phosphorylribose-1-pyrophosphate (PRPP) to anthranilate to yield N-(5'-phosphoribosyl)-anthranilate (PRA). In Xylella fastidiosa (strain 9a5c), this protein is Anthranilate phosphoribosyltransferase.